A 184-amino-acid polypeptide reads, in one-letter code: Autophagy-related protein 101 (184 aa).

This sequence belongs to the ATG101 family. In terms of assembly, component of the atg1 kinase complex composed of at least atg1, atg13, atg17 and atg101. Interacts directly with atg13.

It is found in the cytoplasm. Its subcellular location is the nucleus. The protein resides in the preautophagosomal structure membrane. Autophagy factor required for autophagosome formation. Component of the atg1 kinase complex in which it stabilizes atg13. Is also responsible for recruiting downstream factors to the autophagosome-formation site. Has a role in meiosis and sporulation. In Schizosaccharomyces pombe (strain 972 / ATCC 24843) (Fission yeast), this protein is Autophagy-related protein 101.